Reading from the N-terminus, the 503-residue chain is Carboxyl-terminal PDZ ligand of neuronal nitric oxide synthase protein (503 aa).

One can recognise a PID domain in the interval 26–191 (FQHGISFEAK…ESERNSDGSG (166 aa)). The interval 170 to 212 (HTQQNADGQEDGESERNSDGSGDPGRQLTGAERVSTATAEETD) is disordered. A phosphoserine mark is found at Ser-183, Ser-187, Ser-190, and Ser-262. A disordered region spans residues 266–285 (LLPSSSSSKPPGLGTGTPLS). The stretch at 319–360 (AAEAAARLEAQARVHQLLLQNKDMLQHISLLVKQVQELELKL) forms a coiled coil. Residues Ser-368, Ser-371, Ser-398, and Ser-414 each carry the phosphoserine modification. The interaction with NOS1 stretch occupies residues 491–503 (QELGDSLDDEIAV). The PDZ-binding signature appears at 501 to 503 (IAV).

Interacts with the PDZ domain of NOS1 or the second PDZ domain of DLG4 through its C-terminus. Interacts with RASD1 and SYN1, SYN2 and SYN3 via its PID domain. Forms a ternary complex with NOS1 and RASD1. Forms a ternary complex with NOS1 and SYN1. In terms of tissue distribution, mainly expressed in brain. Highly expressed in accessory olfactory bulb, caudate-putamen, cerebellum, cerebral cortex, dentate gyrus of the hippocampus, islands of Calleja, olfactory bulb and supraoptic nucleus. Expressed in kidney glomeruli podocytes (at protein level).

Its subcellular location is the cell projection. It is found in the filopodium. It localises to the podosome. Functionally, adapter protein involved in neuronal nitric-oxide (NO) synthesis regulation via its association with nNOS/NOS1. The complex formed with NOS1 and synapsins is necessary for specific NO and synapsin functions at a presynaptic level. Mediates an indirect interaction between NOS1 and RASD1 leading to enhance the ability of NOS1 to activate RASD1. Competes with DLG4 for interaction with NOS1, possibly affecting NOS1 activity by regulating the interaction between NOS1 and DLG4. In kidney podocytes, plays a role in podosomes and filopodia formation through CDC42 activation. This chain is Carboxyl-terminal PDZ ligand of neuronal nitric oxide synthase protein, found in Rattus norvegicus (Rat).